The primary structure comprises 170 residues: RNA pyrophosphohydrolase (170 aa).

The Nudix hydrolase domain maps to 9–162 (PYRPCAGIMV…KRAVYEKVVA (154 aa)). The short motif at 50–71 (GGIDDGERPLTAAIRELYEETG) is the Nudix box element.

It belongs to the Nudix hydrolase family. RppH subfamily. Requires a divalent metal cation as cofactor.

Functionally, accelerates the degradation of transcripts by removing pyrophosphate from the 5'-end of triphosphorylated RNA, leading to a more labile monophosphorylated state that can stimulate subsequent ribonuclease cleavage. The sequence is that of RNA pyrophosphohydrolase from Agrobacterium fabrum (strain C58 / ATCC 33970) (Agrobacterium tumefaciens (strain C58)).